The chain runs to 260 residues: Adenosylcobinamide-GDP ribazoletransferase (260 aa).

6 helical membrane-spanning segments follow: residues 40–60 (AFPL…FMAY), 64–84 (LPPL…TGAL), 117–137 (FAAL…MTII), 192–212 (GIGL…LSLI), 214–234 (ALVL…AKIG), and 240–260 (TLGA…VMAL).

This sequence belongs to the CobS family. Requires Mg(2+) as cofactor.

It is found in the cell inner membrane. The catalysed reaction is alpha-ribazole + adenosylcob(III)inamide-GDP = adenosylcob(III)alamin + GMP + H(+). It catalyses the reaction alpha-ribazole 5'-phosphate + adenosylcob(III)inamide-GDP = adenosylcob(III)alamin 5'-phosphate + GMP + H(+). The protein operates within cofactor biosynthesis; adenosylcobalamin biosynthesis; adenosylcobalamin from cob(II)yrinate a,c-diamide: step 7/7. In terms of biological role, joins adenosylcobinamide-GDP and alpha-ribazole to generate adenosylcobalamin (Ado-cobalamin). Also synthesizes adenosylcobalamin 5'-phosphate from adenosylcobinamide-GDP and alpha-ribazole 5'-phosphate. This Brucella anthropi (strain ATCC 49188 / DSM 6882 / CCUG 24695 / JCM 21032 / LMG 3331 / NBRC 15819 / NCTC 12168 / Alc 37) (Ochrobactrum anthropi) protein is Adenosylcobinamide-GDP ribazoletransferase.